The primary structure comprises 33 residues: Mu-theraphotoxin-Tp1a (33 aa).

3 cysteine pairs are disulfide-bonded: Cys2–Cys17, Cys9–Cys22, and Cys16–Cys29. Ile33 bears the Isoleucine amide mark.

The protein belongs to the neurotoxin 10 (Hwtx-1) family. 55 (ProTx-III) subfamily. Expressed by the venom gland.

The protein localises to the secreted. Its function is as follows. Inhibits voltage-gated sodium channels without significantly altering the voltage dependence of activation or inactivation. Preferentially inhibits human Nav1.7/SCN9A (IC(50)=2.1 nM) &gt; human Nav1.6/SCN8A &gt; human Nav1.2/SCN2A &gt; human Nav1.1/SCN1A &gt; human Nav1.3/SCN3A channels. Exhibits analgesic properties by reversing spontaneous pain induced in mice by intraplantar injection with OD1 (AC P84646), a scorpion toxin that potentiates human Nav1.7/SCN9A. This Thrixopelma pruriens (Peruvian green velvet tarantula) protein is Mu-theraphotoxin-Tp1a.